A 336-amino-acid chain; its full sequence is HTH-type transcriptional regulator AscG (336 aa).

Residues 2–56 (TTMLEVAKRAGVSKATVSRVLSGNGYVSQETKDRVFQAVEESGYRPNLLARNLSA) enclose the HTH lacI-type domain. A DNA-binding region (H-T-H motif) is located at residues 4 to 23 (MLEVAKRAGVSKATVSRVLS).

Functionally, repressor of the asc operon. The cryptic operon is activated by the insertion of IS186 into the ascG gene. This Escherichia coli (strain K12) protein is HTH-type transcriptional regulator AscG (ascG).